The following is a 177-amino-acid chain: Cytidylate kinase (177 aa).

8-16 (GPPGGGKTT) contacts ATP.

This sequence belongs to the cytidylate kinase family. Type 2 subfamily.

The protein localises to the cytoplasm. It carries out the reaction CMP + ATP = CDP + ADP. It catalyses the reaction dCMP + ATP = dCDP + ADP. The sequence is that of Cytidylate kinase from Staphylothermus marinus (strain ATCC 43588 / DSM 3639 / JCM 9404 / F1).